A 478-amino-acid polypeptide reads, in one-letter code: MSKYETVIGLEVHAELSTNSKIFCGCPTEFGAPPNTHTCPICLGHPGVLPVTNKQAVEFAMKAALALNCEISRETKFDRKNYFYPDSPKAYQISQFDQPIGYNGWIDIEVNGETKRIGITRLHLEEDAGKLTHSDFGGESLVDFNRVGVPLVEIVSEPDIRTPEEARAYLEKLKAIIQYTEVSDVRMEQGSLRCDANVSIRPYGQEEFGTKAELKNMNSFRNVQMGLEYEVLRQTEVVSSGGKVVQETRRWDEANKKTLTMRSKEEAHDYRYFPDPDLVRMQISEEWIEAVRATIPELPDARQARYVNEFGLSKDDAGVITISKETADFFDETVKTGAEPKSVANWLMVDLLAHLNANNLVFADVKMTPKGLGEMIKLIEDGTISSKIAKTVFKEMVETGKEPKQIVEEKGLVQISDEGALRQVVVDAVNSNPQAVADFKSGNEKAAAFFVGQVMKQTKGKANPGMVNKLIQEVLNSL.

Belongs to the GatB/GatE family. GatB subfamily. Heterotrimer of A, B and C subunits.

The enzyme catalyses L-glutamyl-tRNA(Gln) + L-glutamine + ATP + H2O = L-glutaminyl-tRNA(Gln) + L-glutamate + ADP + phosphate + H(+). It catalyses the reaction L-aspartyl-tRNA(Asn) + L-glutamine + ATP + H2O = L-asparaginyl-tRNA(Asn) + L-glutamate + ADP + phosphate + 2 H(+). Allows the formation of correctly charged Asn-tRNA(Asn) or Gln-tRNA(Gln) through the transamidation of misacylated Asp-tRNA(Asn) or Glu-tRNA(Gln) in organisms which lack either or both of asparaginyl-tRNA or glutaminyl-tRNA synthetases. The reaction takes place in the presence of glutamine and ATP through an activated phospho-Asp-tRNA(Asn) or phospho-Glu-tRNA(Gln). This Brevibacillus brevis (strain 47 / JCM 6285 / NBRC 100599) protein is Aspartyl/glutamyl-tRNA(Asn/Gln) amidotransferase subunit B.